The following is a 233-amino-acid chain: Hydroxyacylglutathione hydrolase (233 aa).

Residues His52, His54, Asp56, His57, His108, Asp125, and His163 each contribute to the Zn(2+) site.

This sequence belongs to the metallo-beta-lactamase superfamily. Glyoxalase II family. In terms of assembly, monomer. Requires Zn(2+) as cofactor.

It catalyses the reaction an S-(2-hydroxyacyl)glutathione + H2O = a 2-hydroxy carboxylate + glutathione + H(+). Its pathway is secondary metabolite metabolism; methylglyoxal degradation; (R)-lactate from methylglyoxal: step 2/2. In terms of biological role, thiolesterase that catalyzes the hydrolysis of S-D-lactoyl-glutathione to form glutathione and D-lactic acid. The sequence is that of Hydroxyacylglutathione hydrolase from Histophilus somni (strain 129Pt) (Haemophilus somnus).